Here is a 176-residue protein sequence, read N- to C-terminus: ATP-dependent protease subunit HslV (176 aa).

The active site involves threonine 2. Residues glycine 157, cysteine 160, and threonine 163 each coordinate Na(+).

It belongs to the peptidase T1B family. HslV subfamily. In terms of assembly, a double ring-shaped homohexamer of HslV is capped on each side by a ring-shaped HslU homohexamer. The assembly of the HslU/HslV complex is dependent on binding of ATP.

The protein localises to the cytoplasm. It catalyses the reaction ATP-dependent cleavage of peptide bonds with broad specificity.. With respect to regulation, allosterically activated by HslU binding. In terms of biological role, protease subunit of a proteasome-like degradation complex believed to be a general protein degrading machinery. This chain is ATP-dependent protease subunit HslV, found in Photorhabdus laumondii subsp. laumondii (strain DSM 15139 / CIP 105565 / TT01) (Photorhabdus luminescens subsp. laumondii).